The following is a 242-amino-acid chain: Prosalusin (242 aa).

A signal peptide spans 1 to 26 (MAAATRGCRPWGSLLGLLGLVSAAAA). The propeptide occupies 27–189 (AWDLASLRCT…SSWVVYGTNY (163 aa)). Residue 93-100 (GWTGTGKS) participates in ATP binding. Asparagine 149 carries an N-linked (GlcNAc...) asparagine glycan. The tract at residues 210–242 (PPRRSGALPPAPAAPRPALRAQRAGPAGPGAKG) is disordered. The span at 225–235 (RPALRAQRAGP) shows a compositional bias: low complexity. A Lysine amide modification is found at lysine 241.

This sequence belongs to the ClpA/ClpB family. Torsin subfamily. Amidation of salusin-alpha(29-Gly) by peptidylglycine alpha-amidating monooxygenase, PAM, converts Lys-241-Gly-242 to Lys-241-NH2 and gives raise to salusin-alpha. Isoform 4 is ubiquitously expressed, with high level in vascular endothelial cells and vascular smooth muscle cells.

It is found in the secreted. Salusins -alpha and -beta may be endocrine and/or paracrine factors able to increase intracellular calcium concentrations and induce cell mitogenesis. Salusins may also be potent hypotensive peptides. The protein is Prosalusin (TOR2A) of Homo sapiens (Human).